The primary structure comprises 195 residues: Holliday junction branch migration complex subunit RuvA (195 aa).

Residues 1-61 (MYEYFEGIIS…DTGITLYGFQ (61 aa)) are domain I. Positions 62-140 (DQDDKGLFLK…DYVARLDKPE (79 aa)) are domain II. The interval 141–146 (NGEEIS) is flexible linker. The domain III stretch occupies residues 146–195 (SPALNDALLALIALGYTQKEVDRITPKLVEIEADTADQYIKKGLALLLKK).

It belongs to the RuvA family. Homotetramer. Forms an RuvA(8)-RuvB(12)-Holliday junction (HJ) complex. HJ DNA is sandwiched between 2 RuvA tetramers; dsDNA enters through RuvA and exits via RuvB. An RuvB hexamer assembles on each DNA strand where it exits the tetramer. Each RuvB hexamer is contacted by two RuvA subunits (via domain III) on 2 adjacent RuvB subunits; this complex drives branch migration. In the full resolvosome a probable DNA-RuvA(4)-RuvB(12)-RuvC(2) complex forms which resolves the HJ.

It localises to the cytoplasm. Functionally, the RuvA-RuvB-RuvC complex processes Holliday junction (HJ) DNA during genetic recombination and DNA repair, while the RuvA-RuvB complex plays an important role in the rescue of blocked DNA replication forks via replication fork reversal (RFR). RuvA specifically binds to HJ cruciform DNA, conferring on it an open structure. The RuvB hexamer acts as an ATP-dependent pump, pulling dsDNA into and through the RuvAB complex. HJ branch migration allows RuvC to scan DNA until it finds its consensus sequence, where it cleaves and resolves the cruciform DNA. The sequence is that of Holliday junction branch migration complex subunit RuvA from Lactobacillus acidophilus (strain ATCC 700396 / NCK56 / N2 / NCFM).